The primary structure comprises 1792 residues: Brefeldin A-inhibited guanine nucleotide-exchange protein 2 (1792 aa).

N-acetylmethionine is present on M1. Residues 2–224 (QESQTKSMFV…KPQSPVIQAT (223 aa)) form a DCB; DCB:DCB domain and DCB:HUS domain interaction region. Residues 207–294 (ELEKPMQSKP…SRGTDSGAQE (88 aa)) form a disordered region. S214, S218, and S227 each carry phosphoserine. Over residues 214–225 (SKPQSPVIQATA) the composition is skewed to polar residues. Over residues 233-243 (LKQSQAQSKPT) the composition is skewed to polar residues. The residue at position 244 (T244) is a Phosphothreonine. Residues S355 and S356 each carry the phosphoserine modification. The HUS; DCB:HUS domain interaction stretch occupies residues 515-535 (ADAQCVVDIYVNYDCDLNAAN). The residue at position 621 (S621) is a Phosphoserine. At T623 the chain carries Phosphothreonine. A Phosphoserine modification is found at S624. T633 carries the phosphothreonine modification. Residues 661–792 (FNKKPKRGIQ…IIMLTTDLHS (132 aa)) enclose the SEC7 domain. A phosphoserine mark is found at S707, S1518, S1520, S1521, S1532, S1535, S1541, and S1789.

In terms of assembly, homodimer. Interacts with ARFGEF1/BIG1; both proteins are probably part of the same or very similar macromolecular complexes. Interacts with PRKAR1A, PRKAR2A, PRKAR1B, PRKAR2B, PPP1CC, PDE3A, TNFRSF1A, MYCBP and EXOC7. Interacts with GABRB1, GABRB2 and GABRB3. In terms of processing, in vitro phosphorylated by PKA reducing its GEF activity and dephosphorylated by phosphatase PP1.

It localises to the cytoplasm. Its subcellular location is the membrane. The protein localises to the golgi apparatus. The protein resides in the perinuclear region. It is found in the trans-Golgi network. It localises to the endosome. Its subcellular location is the cytoskeleton. The protein localises to the microtubule organizing center. The protein resides in the centrosome. It is found in the cell projection. It localises to the dendrite. Its subcellular location is the cytoplasmic vesicle. The protein localises to the synapse. Inhibited by brefeldin A. In terms of biological role, promotes guanine-nucleotide exchange on ARF1 and ARF3 and to a lower extent on ARF5 and ARF6. Promotes the activation of ARF1/ARF5/ARF6 through replacement of GDP with GTP. Involved in the regulation of Golgi vesicular transport. Required for the integrity of the endosomal compartment. Involved in trafficking from the trans-Golgi network (TGN) to endosomes and is required for membrane association of the AP-1 complex and GGA1. Seems to be involved in recycling of the transferrin receptor from recycling endosomes to the plasma membrane. Probably is involved in the exit of GABA(A) receptors from the endoplasmic reticulum. Involved in constitutive release of tumor necrosis factor receptor 1 via exosome-like vesicles; the function seems to involve PKA and specifically PRKAR2B. Proposed to act as A kinase-anchoring protein (AKAP) and may mediate crosstalk between Arf and PKA pathways. The chain is Brefeldin A-inhibited guanine nucleotide-exchange protein 2 (Arfgef2) from Mus musculus (Mouse).